The primary structure comprises 363 residues: MIIATPEVQDINSFSRLESLQEVYGILWVLAPISIYVLAITIGVLVIVWLEREISAGIQQRIGPEYASPLGILQALADGTKLLFKENLLPSRGNSSLFSIGPSIAVIAILLSYSVIPFSYNLVLADLNIGIFLWIAISSIAPIGLLMSGYGSNNKYSFLGGLRAAAQSISYEIPLTLCVLSISLLSNSLSTVDIVGAQSKYGFWGWNLWRQPIGFIVFLISSLAECERLPFDLPEAEEELVAGYQTEYSGIKFGLFYVASYLNLLVSSLFVTVLYLGGSNLSIPYIFVPGLVEINKADGIFGTTIGIFITLAKTYLFLFIPIATRWTLPRLRMDQLLNLGWKFLLPISLGNLLLTTSSQLLSL.

Helical transmembrane passes span 28-48 (WVLAPISIYVLAITIGVLVIV), 98-118 (FSIGPSIAVIAILLSYSVIPF), 129-149 (IGIFLWIAISSIAPIGLLMSG), 253-273 (FGLFYVASYLNLLVSSLFVTV), 274-294 (LYLGGSNLSIPYIFVPGLVEI), 300-320 (IFGTTIGIFITLAKTYLFLFI), and 336-356 (LLNLGWKFLLPISLGNLLLTT).

This sequence belongs to the complex I subunit 1 family. In terms of assembly, NDH is composed of at least 16 different subunits, 5 of which are encoded in the nucleus.

The protein resides in the plastid. It is found in the chloroplast thylakoid membrane. The catalysed reaction is a plastoquinone + NADH + (n+1) H(+)(in) = a plastoquinol + NAD(+) + n H(+)(out). It carries out the reaction a plastoquinone + NADPH + (n+1) H(+)(in) = a plastoquinol + NADP(+) + n H(+)(out). NDH shuttles electrons from NAD(P)H:plastoquinone, via FMN and iron-sulfur (Fe-S) centers, to quinones in the photosynthetic chain and possibly in a chloroplast respiratory chain. The immediate electron acceptor for the enzyme in this species is believed to be plastoquinone. Couples the redox reaction to proton translocation, and thus conserves the redox energy in a proton gradient. The polypeptide is NAD(P)H-quinone oxidoreductase subunit 1, chloroplastic (Citrus sinensis (Sweet orange)).